We begin with the raw amino-acid sequence, 379 residues long: Chaperone protein DnaJ (379 aa).

A J domain is found at 5–70; sequence DYYEVLGVGK…EKKAAYDQYG (66 aa). Residues 139–217 form a CR-type zinc finger; it reads GHEAQIRVPH…CHGQGKLKSQ (79 aa). Residues cysteine 152, cysteine 155, cysteine 169, cysteine 172, cysteine 191, cysteine 194, cysteine 205, and cysteine 208 each contribute to the Zn(2+) site. CXXCXGXG motif repeat units lie at residues 152 to 159, 169 to 176, 191 to 198, and 205 to 212; these read CDHCHGNG, CPTCHGAG, CPKCHGSG, and CTKCHGQG. The interval 356 to 379 is disordered; sequence VHEGGSRHSPQEQSWLDKVKSFFS.

The protein belongs to the DnaJ family. Homodimer. The cofactor is Zn(2+).

The protein localises to the cytoplasm. Functionally, participates actively in the response to hyperosmotic and heat shock by preventing the aggregation of stress-denatured proteins and by disaggregating proteins, also in an autonomous, DnaK-independent fashion. Unfolded proteins bind initially to DnaJ; upon interaction with the DnaJ-bound protein, DnaK hydrolyzes its bound ATP, resulting in the formation of a stable complex. GrpE releases ADP from DnaK; ATP binding to DnaK triggers the release of the substrate protein, thus completing the reaction cycle. Several rounds of ATP-dependent interactions between DnaJ, DnaK and GrpE are required for fully efficient folding. Also involved, together with DnaK and GrpE, in the DNA replication of plasmids through activation of initiation proteins. The chain is Chaperone protein DnaJ from Cupriavidus pinatubonensis (strain JMP 134 / LMG 1197) (Cupriavidus necator (strain JMP 134)).